The primary structure comprises 245 residues: Probable inactive carboxylesterase Os04g0669700 (245 aa).

Active-site charge relay system residues include Ser115 and His201.

Belongs to the AB hydrolase superfamily. AB hydrolase 2 family.

In Oryza sativa subsp. japonica (Rice), this protein is Probable inactive carboxylesterase Os04g0669700.